Consider the following 257-residue polypeptide: Homeobox protein ceh-36 (257 aa).

The segment covering 33-49 has biased composition (low complexity); that stretch reads SATTSSTTMAPMAPNSE. 2 disordered regions span residues 33–63 and 113–156; these read SATT…TSFN and DRNN…GTPE. Residues 55–117 constitute a DNA-binding region (homeobox); it reads GRRERTSFNR…NRRAKDRNNK (63 aa). A compositionally biased stretch (low complexity) spans 123-137; the sequence is HPGSTSSRSSNGSPH.

Belongs to the paired homeobox family. As to quaternary structure, interacts with sox-2. In terms of tissue distribution, expressed in ASE and AWC chemosensory neurons. Expressed left-right asymmetrically in the embryo, in the grandmother cell and the mother cell to the MI pharyngeal motorneuron but in neither analogous precursors of the e3D neuron.

It is found in the nucleus. In terms of biological role, probable transcription factor, acting as a progenitor identity factor regulating the development of lineally-related embryonic cells including glial, excretory and neuronal cells. Mediates chemosensory function of ASE and AWC neurons. In ASE neurons, required to diversify the fate of the ASEL neurons from the ASER neurons. Acts cell-autonomously to establish a neuronal left right asymmetry, possibly promoting asymmetric expression of the helix-loop-helix proteins ngn-1 and hlh-2. In cooperation with the transcription factor sox-2, required for the differentiation of AWC olfactory neurons. May regulate the expression of sox-2 in AWC olfactory neurons. The chain is Homeobox protein ceh-36 from Caenorhabditis elegans.